Consider the following 179-residue polypeptide: Large ribosomal subunit protein uL5 (179 aa).

The protein belongs to the universal ribosomal protein uL5 family. In terms of assembly, part of the 50S ribosomal subunit; part of the 5S rRNA/L5/L18/L25 subcomplex. Contacts the 5S rRNA and the P site tRNA. Forms a bridge to the 30S subunit in the 70S ribosome.

Its function is as follows. This is one of the proteins that bind and probably mediate the attachment of the 5S RNA into the large ribosomal subunit, where it forms part of the central protuberance. In the 70S ribosome it contacts protein S13 of the 30S subunit (bridge B1b), connecting the 2 subunits; this bridge is implicated in subunit movement. Contacts the P site tRNA; the 5S rRNA and some of its associated proteins might help stabilize positioning of ribosome-bound tRNAs. This chain is Large ribosomal subunit protein uL5, found in Dictyoglomus turgidum (strain DSM 6724 / Z-1310).